A 107-amino-acid chain; its full sequence is Phosphoribosyl-ATP pyrophosphatase (107 aa).

Belongs to the PRA-PH family.

It is found in the cytoplasm. The catalysed reaction is 1-(5-phospho-beta-D-ribosyl)-ATP + H2O = 1-(5-phospho-beta-D-ribosyl)-5'-AMP + diphosphate + H(+). The protein operates within amino-acid biosynthesis; L-histidine biosynthesis; L-histidine from 5-phospho-alpha-D-ribose 1-diphosphate: step 2/9. The protein is Phosphoribosyl-ATP pyrophosphatase of Bacillus cereus (strain ATCC 14579 / DSM 31 / CCUG 7414 / JCM 2152 / NBRC 15305 / NCIMB 9373 / NCTC 2599 / NRRL B-3711).